A 133-amino-acid chain; its full sequence is Acyl-CoA thioester hydrolase YciA (133 aa).

The HotDog ACOT-type domain occupies 8-123 (PQGELVLRTL…LFIYVAVDPD (116 aa)).

Belongs to the acyl coenzyme A hydrolase family.

Catalyzes the hydrolysis of the thioester bond in palmitoyl-CoA and malonyl-CoA. The sequence is that of Acyl-CoA thioester hydrolase YciA (yciA) from Salmonella typhi.